Here is a 218-residue protein sequence, read N- to C-terminus: MRTTTKKQIERTDPTLPNVHHLVVGATGSGKSAFIRDQVDFKGARVLAWDVDEDYRLPRVRSIKQFEKLVKKSGFGAIRCALTVEPTEENFERFCQLVFAISHAGAPMVVIVEELADVARIGKASPHWGQLSRKGRKYGVQLYVATQSPQEIDKTIVRQCNFKFCGALNSASAWRSMADNLDLSTREIKQLENIPKKQVQYWLKDGTRPTEKKTLTFK.

It localises to the virion membrane. The polypeptide is Protein P9 (IX) (Pseudoalteromonas espejiana (Bacteriophage PM2)).